Here is an 893-residue protein sequence, read N- to C-terminus: DNA mismatch repair protein MutS (893 aa).

638–645 (GPNMAGKS) serves as a coordination point for ATP.

The protein belongs to the DNA mismatch repair MutS family.

This protein is involved in the repair of mismatches in DNA. It is possible that it carries out the mismatch recognition step. This protein has a weak ATPase activity. The sequence is that of DNA mismatch repair protein MutS from Lawsonia intracellularis (strain PHE/MN1-00).